Consider the following 415-residue polypeptide: Casein kinase 1-like protein 3 (415 aa).

One can recognise a Protein kinase domain in the interval 9–277; sequence YKLGRKIGGG…FLKRLFRDLF (269 aa). ATP contacts are provided by residues 15–23 and K38; that span reads IGGGSFGEI. The Proton acceptor role is filled by D128. Composition is skewed to polar residues over residues 303 to 314 and 373 to 415; these read NQSQAVPGSSNP and NMPS…SPEK. Disordered stretches follow at residues 303 to 330 and 344 to 415; these read NQSQ…GPNI and NAIG…SPEK.

The protein belongs to the protein kinase superfamily. CK1 Ser/Thr protein kinase family. Casein kinase I subfamily. Post-translationally, slightly autophosphorylated. As to expression, expressed in seedlings, stems, leaves and flowers.

The protein localises to the cytoplasm. Its subcellular location is the nucleus. It catalyses the reaction L-seryl-[protein] + ATP = O-phospho-L-seryl-[protein] + ADP + H(+). The enzyme catalyses L-threonyl-[protein] + ATP = O-phospho-L-threonyl-[protein] + ADP + H(+). In terms of biological role, protein kinase involved in blue light responses (e.g. hypocotyl elongation and flowering) by phosphorylating CRY2 to reduce its stability. The chain is Casein kinase 1-like protein 3 from Arabidopsis thaliana (Mouse-ear cress).